The sequence spans 296 residues: 4-hydroxy-tetrahydrodipicolinate synthase (296 aa).

Thr-49 provides a ligand contact to pyruvate. Catalysis depends on Tyr-137, which acts as the Proton donor/acceptor. The active-site Schiff-base intermediate with substrate is the Lys-166. Ile-208 contributes to the pyruvate binding site.

The protein belongs to the DapA family. As to quaternary structure, homotetramer; dimer of dimers.

It localises to the cytoplasm. It carries out the reaction L-aspartate 4-semialdehyde + pyruvate = (2S,4S)-4-hydroxy-2,3,4,5-tetrahydrodipicolinate + H2O + H(+). Its pathway is amino-acid biosynthesis; L-lysine biosynthesis via DAP pathway; (S)-tetrahydrodipicolinate from L-aspartate: step 3/4. In terms of biological role, catalyzes the condensation of (S)-aspartate-beta-semialdehyde [(S)-ASA] and pyruvate to 4-hydroxy-tetrahydrodipicolinate (HTPA). This Chlorobium phaeovibrioides (strain DSM 265 / 1930) (Prosthecochloris vibrioformis (strain DSM 265)) protein is 4-hydroxy-tetrahydrodipicolinate synthase.